We begin with the raw amino-acid sequence, 368 residues long: MKVSAIAAVAALAAVAVAGPVRPSGDKYLIELGPGKTQWVTKDQKHKMRAAGQTFIDITNEIGTNFVATKPVAANYPKNIAHPSMVSSMIANLSKENLMRDLQAMSEFNNRYYESQTGVESANWLMEQVKKVIDESGAQGAKVEKIENQFNQFNIIATIPGSSESTVIVGAHQDSINQEDPMGGRAPGADDNGSGSVVVLEALRGVLGSKAFRAANNTNTLEFHWYAGEEGGLLGSQTVFSKYKSDGRQVKAMLNQDLAGFKGQGQEQFGLITDNTNQELNQFCKMIVEKYASIPIVDTECGYACSDHASADRNGFPASMVAETAFEDSNPHIHSADDTVEYLDFDHMLEHAKVALGFMTELGMASNL.

A signal peptide spans 1 to 18 (MKVSAIAAVAALAAVAVA). Asn-92 carries an N-linked (GlcNAc...) asparagine glycan. The Zn(2+) site is built by His-172 and Asp-191. N-linked (GlcNAc...) asparagine glycans are attached at residues Asn-192 and Asn-216. 2 residues coordinate Zn(2+): Glu-230 and Asp-257. Cys-301 and Cys-305 are disulfide-bonded. Residue His-334 coordinates Zn(2+).

This sequence belongs to the peptidase M28 family. M28E subfamily. In terms of assembly, monomer. Zn(2+) serves as cofactor.

The protein resides in the secreted. Functionally, probable extracellular aminopeptidase which contributes to pathogenicity. The polypeptide is Probable leucine aminopeptidase ARB_03492 (Arthroderma benhamiae (strain ATCC MYA-4681 / CBS 112371) (Trichophyton mentagrophytes)).